We begin with the raw amino-acid sequence, 61 residues long: Small ribosomal subunit protein uS14 (61 aa).

Residues Cys24, Cys27, Cys40, and Cys43 each contribute to the Zn(2+) site.

Belongs to the universal ribosomal protein uS14 family. Zinc-binding uS14 subfamily. Part of the 30S ribosomal subunit. Contacts proteins S3 and S10. The cofactor is Zn(2+).

Functionally, binds 16S rRNA, required for the assembly of 30S particles and may also be responsible for determining the conformation of the 16S rRNA at the A site. This Oleidesulfovibrio alaskensis (strain ATCC BAA-1058 / DSM 17464 / G20) (Desulfovibrio alaskensis) protein is Small ribosomal subunit protein uS14.